The chain runs to 171 residues: S-ribosylhomocysteine lyase (171 aa).

The Fe cation site is built by H54, H58, and C128.

Belongs to the LuxS family. Homodimer. Fe cation serves as cofactor.

It carries out the reaction S-(5-deoxy-D-ribos-5-yl)-L-homocysteine = (S)-4,5-dihydroxypentane-2,3-dione + L-homocysteine. Involved in the synthesis of autoinducer 2 (AI-2) which is secreted by bacteria and is used to communicate both the cell density and the metabolic potential of the environment. The regulation of gene expression in response to changes in cell density is called quorum sensing. Catalyzes the transformation of S-ribosylhomocysteine (RHC) to homocysteine (HC) and 4,5-dihydroxy-2,3-pentadione (DPD). This Yersinia enterocolitica serotype O:8 / biotype 1B (strain NCTC 13174 / 8081) protein is S-ribosylhomocysteine lyase.